The sequence spans 140 residues: Histone H3-like centromeric protein A (140 aa).

Residues 1–46 (MGPRRRSRKPEAPRRRSPSPTPTPGPSRRGPSLGASSHQHSRRRQG) form a disordered region. Gly-2 carries the n,N,N-trimethylglycine modification. Ser-7 carries the post-translational modification Phosphoserine; by AURKA and AURKB. Residues Ser-17, Ser-19, and Ser-27 each carry the phosphoserine modification. A compositionally biased stretch (low complexity) spans 26–37 (PSRRGPSLGASS). Positions 39–54 (QHSRRRQGWLKEIRKL) are important for flexibility of DNA ends that protrude from nucleosomes. Ser-68 carries the phosphoserine modification. Residues 75–116 (CVKFTRGVDFNWQAQALLALQEAAEAFLVHLFEDAYLLTLHA) are CATD.

The protein belongs to the histone H3 family. In terms of assembly, component of centromeric nucleosomes, where DNA is wrapped around a histone octamer core. The octamer contains two molecules each of H2A, H2B, CENPA and H4 assembled in one CENPA-H4 heterotetramer and two H2A-H2B heterodimers. CENPA modulates the DNA-binding characteristics of nucleosomes so that protruding DNA ends have higher flexibility than in nucleosomes containing conventional histone H3. Inhibits binding of histone H1 to nucleosomes, since histone H1 binds preferentially to rigid DNA linkers that protrude from nucleosomes. Nucleosomes containing CENPA also contain histone H2A variants such as MACROH2A and H2A.Z/H2AZ1. The CENPA-H4 heterotetramer is more compact and structurally more rigid than corresponding H3-H4 heterotetramers. Can assemble into nucleosomes that contain both CENPA and histone H3.3; these nucleosomes interact with a single CENPC chain. Heterotrimer composed of HJURP, CENPA and histone H4, where HJURP interacts with the dimer formed by CENPA and histone H4 and prevents tetramerization of CENPA and H4. Component of the CENPA-NAC complex, at least composed of CENPA, CENPC, CENPH, CENPM, CENPN, CENPT and CENPU. Interacts (via CATD domain) with HJURP; the interaction is direct and is required for its localization to centromeres. Interacts with CENPC, CENPN and CENPT; interaction is direct. Part of a centromere complex consisting of CENPA, CENPT and CENPW. Identified in centromere complexes containing histones H2A, H2B and H4, and at least CENPA, CENPB, CENPC, CENPT, CENPN, HJURP, SUPT16H, SSRP1 and RSF1. Can self-associate. The CENPA-H4 heterotetramer can bind DNA by itself (in vitro). Interacts with CDK1, PPP1CA and RBBP7. As to quaternary structure, (Microbial infection) Interacts directly with herpes virus HHV-1 protein ICP0. Post-translationally, ubiquitinated. Interaction with herpes virus HSV-1 ICP0 protein, leads to its degradation by the proteasome pathway. In terms of processing, trimethylated by NTMT1 at the N-terminal glycine after cleavage of Met-1. Methylation is low before incorporation into nucleosomes and increases with cell cycle progression, with the highest levels in mitotic nucleosomes. Phosphorylated by CDK1 at Ser-68 during early mitosis; this abolishes association with chromatin and centromeres, prevents interaction with HJURP and thereby prevents premature assembly of CENPA into centromeres. Dephosphorylated at Ser-68 by PPP1CA during late mitosis. Phosphorylation of Ser-7 by AURKA and AURKB during prophase is required for localization of AURKA and AURKB at inner centromere and is essential for normal cytokinesis. Initial phosphorylation during prophase is mediated by AURKA and is maintained by AURKB. Post-translationally, poly-ADP-ribosylated by PARP1.

The protein localises to the nucleus. Its subcellular location is the chromosome. It is found in the centromere. Its function is as follows. Histone H3-like nucleosomal protein that is specifically found in centromeric nucleosomes. Replaces conventional H3 in the nucleosome core of centromeric chromatin that serves as an assembly site for the inner kinetochore. The presence of CENPA subtly modifies the nucleosome structure and the way DNA is wrapped around the nucleosome and gives rise to protruding DNA ends that are less well-ordered and rigid compared to nucleosomes containing histone H3. May serve as an epigenetic mark that propagates centromere identity through replication and cell division. Required for recruitment and assembly of kinetochore proteins, and as a consequence required for progress through mitosis, chromosome segregation and cytokinesis. The sequence is that of Histone H3-like centromeric protein A (CENPA) from Homo sapiens (Human).